The chain runs to 545 residues: CTP synthase (545 aa).

The interval 1–266 is amidoligase domain; sequence MTTRYIFVTG…DDLVTKRFGL (266 aa). CTP is bound at residue Ser14. Residue Ser14 participates in UTP binding. ATP contacts are provided by residues 15–20 and Asp72; that span reads SLGKGI. Residues Asp72 and Glu140 each contribute to the Mg(2+) site. CTP-binding positions include 147-149, 187-192, and Lys223; these read DIE and KTKPTQ. Residues 187–192 and Lys223 contribute to the UTP site; that span reads KTKPTQ. 239-241 contacts ATP; the sequence is KDV. The region spanning 291 to 542 is the Glutamine amidotransferase type-1 domain; it reads TIGMVGKYTE…VAAAVAYQKR (252 aa). Residue Gly352 participates in L-glutamine binding. Residue Cys379 is the Nucleophile; for glutamine hydrolysis of the active site. L-glutamine-binding positions include 380–383, Glu403, and Arg470; that span reads LGMQ. Active-site residues include His515 and Glu517.

Belongs to the CTP synthase family. As to quaternary structure, homotetramer.

It catalyses the reaction UTP + L-glutamine + ATP + H2O = CTP + L-glutamate + ADP + phosphate + 2 H(+). The enzyme catalyses L-glutamine + H2O = L-glutamate + NH4(+). It carries out the reaction UTP + NH4(+) + ATP = CTP + ADP + phosphate + 2 H(+). It functions in the pathway pyrimidine metabolism; CTP biosynthesis via de novo pathway; CTP from UDP: step 2/2. Its activity is regulated as follows. Allosterically activated by GTP, when glutamine is the substrate; GTP has no effect on the reaction when ammonia is the substrate. The allosteric effector GTP functions by stabilizing the protein conformation that binds the tetrahedral intermediate(s) formed during glutamine hydrolysis. Inhibited by the product CTP, via allosteric rather than competitive inhibition. Functionally, catalyzes the ATP-dependent amination of UTP to CTP with either L-glutamine or ammonia as the source of nitrogen. Regulates intracellular CTP levels through interactions with the four ribonucleotide triphosphates. This Shewanella loihica (strain ATCC BAA-1088 / PV-4) protein is CTP synthase.